We begin with the raw amino-acid sequence, 249 residues long: Probable transcriptional regulatory protein OTBS_0251 (249 aa).

The protein belongs to the TACO1 family.

It is found in the cytoplasm. This is Probable transcriptional regulatory protein OTBS_0251 from Orientia tsutsugamushi (strain Boryong) (Rickettsia tsutsugamushi).